The following is a 151-amino-acid chain: Large ribosomal subunit protein uL22 (151 aa).

This sequence belongs to the universal ribosomal protein uL22 family. As to quaternary structure, part of the 50S ribosomal subunit.

In terms of biological role, this protein binds specifically to 23S rRNA. It makes multiple contacts with different domains of the 23S rRNA in the assembled 50S subunit and ribosome. Its function is as follows. The globular domain of the protein is located near the polypeptide exit tunnel on the outside of the subunit, while an extended beta-hairpin is found that lines the wall of the exit tunnel in the center of the 70S ribosome. The sequence is that of Large ribosomal subunit protein uL22 from Methanococcoides burtonii (strain DSM 6242 / NBRC 107633 / OCM 468 / ACE-M).